The following is a 410-amino-acid chain: Peptidase T (410 aa).

His-79 contacts Zn(2+). Asp-81 is an active-site residue. Asp-142 is a binding site for Zn(2+). Glu-176 functions as the Proton acceptor in the catalytic mechanism. Zn(2+) is bound by residues Glu-177, Asp-199, and His-381.

Belongs to the peptidase M20B family. Zn(2+) serves as cofactor.

It is found in the cytoplasm. It catalyses the reaction Release of the N-terminal residue from a tripeptide.. In terms of biological role, cleaves the N-terminal amino acid of tripeptides. In Bacillus thuringiensis subsp. konkukian (strain 97-27), this protein is Peptidase T.